The chain runs to 376 residues: Chaperone protein DnaJ (376 aa).

Residues Asp5–Gly70 enclose the J domain. The segment at Gly131–Thr209 adopts a CR-type zinc-finger fold. 8 residues coordinate Zn(2+): Cys144, Cys147, Cys161, Cys164, Cys183, Cys186, Cys197, and Cys200. 4 CXXCXGXG motif repeats span residues Cys144–Gly151, Cys161–Gly168, Cys183–Gly190, and Cys197–Gly204.

This sequence belongs to the DnaJ family. Homodimer. The cofactor is Zn(2+).

Its subcellular location is the cytoplasm. In terms of biological role, participates actively in the response to hyperosmotic and heat shock by preventing the aggregation of stress-denatured proteins and by disaggregating proteins, also in an autonomous, DnaK-independent fashion. Unfolded proteins bind initially to DnaJ; upon interaction with the DnaJ-bound protein, DnaK hydrolyzes its bound ATP, resulting in the formation of a stable complex. GrpE releases ADP from DnaK; ATP binding to DnaK triggers the release of the substrate protein, thus completing the reaction cycle. Several rounds of ATP-dependent interactions between DnaJ, DnaK and GrpE are required for fully efficient folding. Also involved, together with DnaK and GrpE, in the DNA replication of plasmids through activation of initiation proteins. In Tolumonas auensis (strain DSM 9187 / NBRC 110442 / TA 4), this protein is Chaperone protein DnaJ.